Reading from the N-terminus, the 52-residue chain is Large ribosomal subunit protein bL33 (52 aa).

Belongs to the bacterial ribosomal protein bL33 family.

This Helicobacter acinonychis (strain Sheeba) protein is Large ribosomal subunit protein bL33.